The primary structure comprises 124 residues: Small ribosomal subunit protein uS12 (124 aa).

Asp-89 is subject to 3-methylthioaspartic acid.

It belongs to the universal ribosomal protein uS12 family. Part of the 30S ribosomal subunit. Contacts proteins S8 and S17. May interact with IF1 in the 30S initiation complex.

With S4 and S5 plays an important role in translational accuracy. Its function is as follows. Interacts with and stabilizes bases of the 16S rRNA that are involved in tRNA selection in the A site and with the mRNA backbone. Located at the interface of the 30S and 50S subunits, it traverses the body of the 30S subunit contacting proteins on the other side and probably holding the rRNA structure together. The combined cluster of proteins S8, S12 and S17 appears to hold together the shoulder and platform of the 30S subunit. The protein is Small ribosomal subunit protein uS12 of Baumannia cicadellinicola subsp. Homalodisca coagulata.